Consider the following 159-residue polypeptide: NADH-quinone oxidoreductase subunit I (159 aa).

2 consecutive 4Fe-4S ferredoxin-type domains span residues 51–80 (RRYE…IEAD) and 90–119 (TRYD…EGPN). [4Fe-4S] cluster contacts are provided by Cys-60, Cys-63, Cys-66, Cys-70, Cys-99, Cys-102, Cys-105, and Cys-109.

It belongs to the complex I 23 kDa subunit family. NDH-1 is composed of 14 different subunits. Subunits NuoA, H, J, K, L, M, N constitute the membrane sector of the complex. [4Fe-4S] cluster serves as cofactor.

It is found in the cell inner membrane. The enzyme catalyses a quinone + NADH + 5 H(+)(in) = a quinol + NAD(+) + 4 H(+)(out). NDH-1 shuttles electrons from NADH, via FMN and iron-sulfur (Fe-S) centers, to quinones in the respiratory chain. The immediate electron acceptor for the enzyme in this species is believed to be ubiquinone. Couples the redox reaction to proton translocation (for every two electrons transferred, four hydrogen ions are translocated across the cytoplasmic membrane), and thus conserves the redox energy in a proton gradient. In Rickettsia conorii (strain ATCC VR-613 / Malish 7), this protein is NADH-quinone oxidoreductase subunit I.